A 70-amino-acid polypeptide reads, in one-letter code: MIGILLLIGICVAVTVAILYSMYNKIKNSQNPNPSPNLNSPPPEPKNTKFVNNLEKDHISSLYNLVKSSV.

A helical membrane pass occupies residues Met1–Ser21. The Virion surface portion of the chain corresponds to Met22 to Val70. The interval Gln30–Phe50 is disordered. The span at Asn33–Pro45 shows a compositional bias: pro residues. Residue Ser40 is modified to Phosphoserine; by host.

It belongs to the orthopoxvirus OPG139 family. Post-translationally, phosphorylated by a OPG054-independent mechanism.

Its subcellular location is the virion membrane. Functionally, essential for the encapsidation of DNA into immature virions (IV) and the subsequent maturation of IV into mature virions (MV). The sequence is that of Virion membrane protein OPG139 (OPG139) from Homo sapiens (Human).